The chain runs to 283 residues: 2-dehydro-3-deoxyphosphooctonate aldolase (283 aa).

This sequence belongs to the KdsA family.

The protein resides in the cytoplasm. The enzyme catalyses D-arabinose 5-phosphate + phosphoenolpyruvate + H2O = 3-deoxy-alpha-D-manno-2-octulosonate-8-phosphate + phosphate. The protein operates within carbohydrate biosynthesis; 3-deoxy-D-manno-octulosonate biosynthesis; 3-deoxy-D-manno-octulosonate from D-ribulose 5-phosphate: step 2/3. Its pathway is bacterial outer membrane biogenesis; lipopolysaccharide biosynthesis. This Vibrio campbellii (strain ATCC BAA-1116) protein is 2-dehydro-3-deoxyphosphooctonate aldolase.